The chain runs to 321 residues: Glucokinase (321 aa).

ATP is bound at residue 8-13 (GDVGGT).

Belongs to the bacterial glucokinase family.

The protein localises to the cytoplasm. It catalyses the reaction D-glucose + ATP = D-glucose 6-phosphate + ADP + H(+). This chain is Glucokinase, found in Shigella dysenteriae serotype 1 (strain Sd197).